Consider the following 247-residue polypeptide: Dihydroorotate dehydrogenase B (NAD(+)), electron transfer subunit (247 aa).

In terms of domain architecture, FAD-binding FR-type spans 2–96 (RWKMKARVLS…TGPHGNGFEI (95 aa)). Residues 49 to 52 (RPFS), 64 to 66 (LYQ), and 71 to 72 (GT) contribute to the FAD site. The [2Fe-2S] cluster site is built by Cys-210, Cys-215, Cys-218, and Cys-234.

Belongs to the PyrK family. As to quaternary structure, heterotetramer of 2 PyrK and 2 PyrD type B subunits. Requires [2Fe-2S] cluster as cofactor. FAD serves as cofactor.

It participates in pyrimidine metabolism; UMP biosynthesis via de novo pathway; orotate from (S)-dihydroorotate (NAD(+) route): step 1/1. Responsible for channeling the electrons from the oxidation of dihydroorotate from the FMN redox center in the PyrD type B subunit to the ultimate electron acceptor NAD(+). This chain is Dihydroorotate dehydrogenase B (NAD(+)), electron transfer subunit, found in Caldanaerobacter subterraneus subsp. tengcongensis (strain DSM 15242 / JCM 11007 / NBRC 100824 / MB4) (Thermoanaerobacter tengcongensis).